A 101-amino-acid polypeptide reads, in one-letter code: UPF0751 protein DSY3086 (101 aa).

The protein belongs to the UPF0751 family.

The sequence is that of UPF0751 protein DSY3086 from Desulfitobacterium hafniense (strain Y51).